The primary structure comprises 399 residues: Type II secretion system protein L (399 aa).

At 1–247 (MSKAENTSGK…VKPWKQALLP (247 aa)) the chain is on the cytoplasmic side. The helical transmembrane segment at 248 to 264 (WRNVLIALSAWLLLVLG) threads the bilayer. Over 265 to 399 (ESVWTHYQWY…EGQLTLRSQP (135 aa)) the chain is Periplasmic.

The protein belongs to the GSP L family. Type II secretion system is composed of four main components: the outer membrane complex, the inner membrane complex, the cytoplasmic secretion ATPase and the periplasm-spanning pseudopilus. Forms homodimers. Interacts with OutM/GspM. Interacts with OutE/GspE and OutF/GspF.

The protein resides in the cell inner membrane. Functionally, inner membrane component of the type II secretion system required for the energy-dependent secretion of extracellular factors such as proteases and toxins from the periplasm. Plays a role in the complex assembly and recruits OutM resulting in a stable complex in the inner membrane. Provides thus a link between the energy-providing OutE protein in the cytoplasm and the rest of the T2SS machinery. The polypeptide is Type II secretion system protein L (outL) (Dickeya chrysanthemi (Pectobacterium chrysanthemi)).